The chain runs to 697 residues: Potassium-transporting ATPase ATP-binding subunit (697 aa).

The next 4 membrane-spanning stretches (helical) occupy residues 55-75 (PIMF…FLPS), 79-99 (SIPG…VLFA), 245-265 (LTLI…YLGF), and 271-291 (VLVA…LSAI). The active-site 4-aspartylphosphate intermediate is aspartate 324. Residues aspartate 361, glutamate 365, 393-400 (FKAETRMS), and lysine 412 each bind ATP. Positions 535 and 539 each coordinate Mg(2+). Transmembrane regions (helical) follow at residues 605-625 (FAII…LNIM), 633-653 (AILS…PLAM), and 677-697 (GGVI…GLFI).

Belongs to the cation transport ATPase (P-type) (TC 3.A.3) family. Type IA subfamily. The system is composed of three essential subunits: KdpA, KdpB and KdpC.

The protein localises to the cell membrane. It catalyses the reaction K(+)(out) + ATP + H2O = K(+)(in) + ADP + phosphate + H(+). Part of the high-affinity ATP-driven potassium transport (or Kdp) system, which catalyzes the hydrolysis of ATP coupled with the electrogenic transport of potassium into the cytoplasm. This subunit is responsible for energy coupling to the transport system and for the release of the potassium ions to the cytoplasm. The sequence is that of Potassium-transporting ATPase ATP-binding subunit from Bacillus cereus (strain B4264).